We begin with the raw amino-acid sequence, 709 residues long: UvrABC system protein B (709 aa).

The Helicase ATP-binding domain maps to Glu35–Val416. Gly48–Ser55 contributes to the ATP binding site. Positions Tyr101–Ile124 match the Beta-hairpin motif. One can recognise a Helicase C-terminal domain in the interval Gln438–Thr604. Positions Ala666–Glu701 constitute a UVR domain.

This sequence belongs to the UvrB family. In terms of assembly, forms a heterotetramer with UvrA during the search for lesions. Interacts with UvrC in an incision complex.

It is found in the cytoplasm. Its function is as follows. The UvrABC repair system catalyzes the recognition and processing of DNA lesions. A damage recognition complex composed of 2 UvrA and 2 UvrB subunits scans DNA for abnormalities. Upon binding of the UvrA(2)B(2) complex to a putative damaged site, the DNA wraps around one UvrB monomer. DNA wrap is dependent on ATP binding by UvrB and probably causes local melting of the DNA helix, facilitating insertion of UvrB beta-hairpin between the DNA strands. Then UvrB probes one DNA strand for the presence of a lesion. If a lesion is found the UvrA subunits dissociate and the UvrB-DNA preincision complex is formed. This complex is subsequently bound by UvrC and the second UvrB is released. If no lesion is found, the DNA wraps around the other UvrB subunit that will check the other stand for damage. This is UvrABC system protein B from Micrococcus luteus (strain ATCC 4698 / DSM 20030 / JCM 1464 / CCM 169 / CCUG 5858 / IAM 1056 / NBRC 3333 / NCIMB 9278 / NCTC 2665 / VKM Ac-2230) (Micrococcus lysodeikticus).